The primary structure comprises 419 residues: L-rhamnose isomerase (419 aa).

Residues His262, Asp294, and Asp296 each coordinate Mn(2+).

The protein belongs to the rhamnose isomerase family. Homotetramer. Mn(2+) serves as cofactor.

Its subcellular location is the cytoplasm. It carries out the reaction L-rhamnopyranose = L-rhamnulose. Its pathway is carbohydrate degradation; L-rhamnose degradation; glycerone phosphate from L-rhamnose: step 1/3. Its function is as follows. Catalyzes the interconversion of L-rhamnose and L-rhamnulose. The sequence is that of L-rhamnose isomerase from Salmonella enteritidis PT4 (strain P125109).